The primary structure comprises 613 residues: Probable potassium transport system protein Kup (613 aa).

Transmembrane regions (helical) follow at residues 38-58 (VLGVLSLLIWALLLIVTLKYL), 91-111 (WILVSLGLFGAALLYGDGMIT), 128-148 (PSFGPLVIPVTIAILAGLFLF), 159-179 (FFGPIILLWFTSIGLCGLVEI), 206-226 (FLVLGAVFLAVTGAEALYADM), 238-258 (WSLLVLPALLLNYFGQGAVLL), 270-290 (ALVPSWGIIPMVILATLATII), 328-348 (IYVPAANWALMFSTIALVAGF), 357-377 (AYGVAVTATMLISAVLFYYVA), 387-407 (GLNLLMGMFMLIDLSFFGASV), and 410-430 (LFHGAWFPLVIGFALFTLMLT).

This sequence belongs to the HAK/KUP transporter (TC 2.A.72) family.

The protein resides in the cell inner membrane. The catalysed reaction is K(+)(in) + H(+)(in) = K(+)(out) + H(+)(out). Functionally, transport of potassium into the cell. Likely operates as a K(+):H(+) symporter. The protein is Probable potassium transport system protein Kup of Chlorobaculum tepidum (strain ATCC 49652 / DSM 12025 / NBRC 103806 / TLS) (Chlorobium tepidum).